A 175-amino-acid chain; its full sequence is Disulfide bond formation protein B (175 aa).

Topologically, residues Met1–Ser13 are cytoplasmic. A helical transmembrane segment spans residues Trp14–Tyr30. Over Phe31–Leu48 the chain is Periplasmic. A disulfide bridge links Cys40 with Cys43. A helical membrane pass occupies residues Ala49–Pro64. The Cytoplasmic segment spans residues Lys65–Ile71. A helical transmembrane segment spans residues Leu72–Leu89. Residues Ala90–Glu144 are Periplasmic-facing. A disulfide bridge links Cys104 with Cys130. The chain crosses the membrane as a helical span at residues Trp145–Pro163. At Ile164 to Lys175 the chain is on the cytoplasmic side.

Belongs to the DsbB family.

It is found in the cell inner membrane. In terms of biological role, required for disulfide bond formation in some periplasmic proteins. Acts by oxidizing the DsbA protein. In Shewanella sp. (strain MR-4), this protein is Disulfide bond formation protein B.